Here is a 234-residue protein sequence, read N- to C-terminus: Thiamine-phosphate synthase (234 aa).

4-amino-2-methyl-5-(diphosphooxymethyl)pyrimidine contacts are provided by residues 52-56 (QYRSK) and asparagine 84. The Mg(2+) site is built by aspartate 85 and aspartate 104. Residue serine 123 participates in 4-amino-2-methyl-5-(diphosphooxymethyl)pyrimidine binding. 150–152 (SVT) serves as a coordination point for 2-[(2R,5Z)-2-carboxy-4-methylthiazol-5(2H)-ylidene]ethyl phosphate. 4-amino-2-methyl-5-(diphosphooxymethyl)pyrimidine is bound at residue lysine 153. Residue glycine 180 participates in 2-[(2R,5Z)-2-carboxy-4-methylthiazol-5(2H)-ylidene]ethyl phosphate binding.

Belongs to the thiamine-phosphate synthase family. Mg(2+) serves as cofactor.

The enzyme catalyses 2-[(2R,5Z)-2-carboxy-4-methylthiazol-5(2H)-ylidene]ethyl phosphate + 4-amino-2-methyl-5-(diphosphooxymethyl)pyrimidine + 2 H(+) = thiamine phosphate + CO2 + diphosphate. It carries out the reaction 2-(2-carboxy-4-methylthiazol-5-yl)ethyl phosphate + 4-amino-2-methyl-5-(diphosphooxymethyl)pyrimidine + 2 H(+) = thiamine phosphate + CO2 + diphosphate. The catalysed reaction is 4-methyl-5-(2-phosphooxyethyl)-thiazole + 4-amino-2-methyl-5-(diphosphooxymethyl)pyrimidine + H(+) = thiamine phosphate + diphosphate. It functions in the pathway cofactor biosynthesis; thiamine diphosphate biosynthesis; thiamine phosphate from 4-amino-2-methyl-5-diphosphomethylpyrimidine and 4-methyl-5-(2-phosphoethyl)-thiazole: step 1/1. In terms of biological role, condenses 4-methyl-5-(beta-hydroxyethyl)thiazole monophosphate (THZ-P) and 2-methyl-4-amino-5-hydroxymethyl pyrimidine pyrophosphate (HMP-PP) to form thiamine monophosphate (TMP). The protein is Thiamine-phosphate synthase of Nitrosospira multiformis (strain ATCC 25196 / NCIMB 11849 / C 71).